A 29-amino-acid chain; its full sequence is Cytochrome b6-f complex subunit 8 (29 aa).

The helical transmembrane segment at 3–23 (IVSLAWASLMVVFTFSLSLVV) threads the bilayer.

It belongs to the PetN family. As to quaternary structure, the 4 large subunits of the cytochrome b6-f complex are cytochrome b6, subunit IV (17 kDa polypeptide, PetD), cytochrome f and the Rieske protein, while the 4 small subunits are PetG, PetL, PetM and PetN. The complex functions as a dimer.

It is found in the plastid. Its subcellular location is the chloroplast thylakoid membrane. In terms of biological role, component of the cytochrome b6-f complex, which mediates electron transfer between photosystem II (PSII) and photosystem I (PSI), cyclic electron flow around PSI, and state transitions. The chain is Cytochrome b6-f complex subunit 8 from Coffea arabica (Arabian coffee).